Consider the following 83-residue polypeptide: Small ribosomal subunit protein bS16 (83 aa).

This sequence belongs to the bacterial ribosomal protein bS16 family.

The sequence is that of Small ribosomal subunit protein bS16 from Pseudomonas fluorescens (strain Pf0-1).